Consider the following 246-residue polypeptide: Alpha-tubulin N-acetyltransferase (246 aa).

The 182-residue stretch at 21–202 (LTLVPDGVSR…NNFVVFHSFF (182 aa)) folds into the N-acetyltransferase domain. Residues 135 to 148 (FYVD…GYGK) and 172 to 181 (SNKLLGFLRK) each bind acetyl-CoA.

This sequence belongs to the acetyltransferase ATAT1 family.

The catalysed reaction is L-lysyl-[alpha-tubulin] + acetyl-CoA = N(6)-acetyl-L-lysyl-[alpha-tubulin] + CoA + H(+). Specifically acetylates 'Lys-40' in alpha-tubulin on the lumenal side of microtubules. Promotes microtubule destabilization and accelerates microtubule dynamics; this activity may be independent of acetylation activity. Acetylates alpha-tubulin with a slow enzymatic rate, due to a catalytic site that is not optimized for acetyl transfer. Enters the microtubule through each end and diffuses quickly throughout the lumen of microtubules. Acetylates only long/old microtubules because of its slow acetylation rate since it does not have time to act on dynamically unstable microtubules before the enzyme is released. This is Alpha-tubulin N-acetyltransferase from Leishmania major.